The chain runs to 76 residues: ATP synthase subunit 9, mitochondrial (76 aa).

Transmembrane regions (helical) follow at residues 14 to 34 (ISTI…AALI) and 52 to 72 (ILGF…SFLL).

The protein belongs to the ATPase C chain family. F-type ATPases have 2 components, CF(1) - the catalytic core - and CF(0) - the membrane proton channel. CF(1) has five subunits: alpha(3), beta(3), gamma(1), delta(1), epsilon(1). CF(0) has three main subunits: a, b and c.

It is found in the mitochondrion membrane. In terms of biological role, mitochondrial membrane ATP synthase (F(1)F(0) ATP synthase or Complex V) produces ATP from ADP in the presence of a proton gradient across the membrane which is generated by electron transport complexes of the respiratory chain. F-type ATPases consist of two structural domains, F(1) - containing the extramembraneous catalytic core and F(0) - containing the membrane proton channel, linked together by a central stalk and a peripheral stalk. During catalysis, ATP synthesis in the catalytic domain of F(1) is coupled via a rotary mechanism of the central stalk subunits to proton translocation. Part of the complex F(0) domain. A homomeric c-ring of probably 10 subunits is part of the complex rotary element. The sequence is that of ATP synthase subunit 9, mitochondrial (ATP9) from Vanderwaltozyma polyspora (strain ATCC 22028 / DSM 70294 / BCRC 21397 / CBS 2163 / NBRC 10782 / NRRL Y-8283 / UCD 57-17) (Kluyveromyces polysporus).